The sequence spans 551 residues: Glucans biosynthesis protein D (551 aa).

The tat-type signal signal peptide spans 1–32 (MDRRRFIKGSMAMAAVCGTSGIASLFSQAAFA).

The protein belongs to the OpgD/OpgG family. Post-translationally, predicted to be exported by the Tat system. The position of the signal peptide cleavage has not been experimentally proven.

Its subcellular location is the periplasm. The protein operates within glycan metabolism; osmoregulated periplasmic glucan (OPG) biosynthesis. Functionally, probably involved in the control of the structural glucose backbone of osmoregulated periplasmic glucans (OPGs). The protein is Glucans biosynthesis protein D of Escherichia coli O127:H6 (strain E2348/69 / EPEC).